We begin with the raw amino-acid sequence, 274 residues long: MQQLQNVIETAFERRADITPVNVDTVTREAVNQVISLLDSGALRVAEKIDGQWVTHQWLKKAVLLSFRINDNQVIDGAESRYFDKVPMKFADYDEARFQKEGFRVVPPAAVRQGAFIARNTVLMPSYVNIGAYVDEGTMVDTWATVGSCAQIGKNVHLSGGVGIGGVLEPLQANPTIIEDNCFIGARSEVVEGVIVEEGSVISMGVYLGQSTKIYDRETGEVHYGRVPAGSVVVSGNLPSKDGKYSLYCAVIVKKVDAKTRGKVGINELLRTID.

It belongs to the transferase hexapeptide repeat family.

It localises to the cytoplasm. It carries out the reaction (S)-2,3,4,5-tetrahydrodipicolinate + succinyl-CoA + H2O = (S)-2-succinylamino-6-oxoheptanedioate + CoA. Its pathway is amino-acid biosynthesis; L-lysine biosynthesis via DAP pathway; LL-2,6-diaminopimelate from (S)-tetrahydrodipicolinate (succinylase route): step 1/3. The chain is 2,3,4,5-tetrahydropyridine-2,6-dicarboxylate N-succinyltransferase from Salmonella agona (strain SL483).